The sequence spans 196 residues: ATP-dependent Clp protease proteolytic subunit (196 aa).

Catalysis depends on Ser101, which acts as the Nucleophile. His126 is a catalytic residue.

This sequence belongs to the peptidase S14 family. As to quaternary structure, component of the chloroplastic Clp protease core complex.

It is found in the plastid. It localises to the chloroplast stroma. It carries out the reaction Hydrolysis of proteins to small peptides in the presence of ATP and magnesium. alpha-casein is the usual test substrate. In the absence of ATP, only oligopeptides shorter than five residues are hydrolyzed (such as succinyl-Leu-Tyr-|-NHMec, and Leu-Tyr-Leu-|-Tyr-Trp, in which cleavage of the -Tyr-|-Leu- and -Tyr-|-Trp bonds also occurs).. Cleaves peptides in various proteins in a process that requires ATP hydrolysis. Has a chymotrypsin-like activity. Plays a major role in the degradation of misfolded proteins. The sequence is that of ATP-dependent Clp protease proteolytic subunit from Populus trichocarpa (Western balsam poplar).